The following is a 221-amino-acid chain: 3-isopropylmalate dehydratase small subunit (221 aa).

Belongs to the LeuD family. LeuD type 1 subfamily. As to quaternary structure, heterodimer of LeuC and LeuD.

The catalysed reaction is (2R,3S)-3-isopropylmalate = (2S)-2-isopropylmalate. Its pathway is amino-acid biosynthesis; L-leucine biosynthesis; L-leucine from 3-methyl-2-oxobutanoate: step 2/4. Catalyzes the isomerization between 2-isopropylmalate and 3-isopropylmalate, via the formation of 2-isopropylmaleate. The protein is 3-isopropylmalate dehydratase small subunit of Nitrosomonas europaea (strain ATCC 19718 / CIP 103999 / KCTC 2705 / NBRC 14298).